A 106-amino-acid chain; its full sequence is Pyrimidine/purine nucleoside phosphorylase (106 aa).

The protein belongs to the nucleoside phosphorylase PpnP family.

The catalysed reaction is a purine D-ribonucleoside + phosphate = a purine nucleobase + alpha-D-ribose 1-phosphate. It catalyses the reaction adenosine + phosphate = alpha-D-ribose 1-phosphate + adenine. It carries out the reaction cytidine + phosphate = cytosine + alpha-D-ribose 1-phosphate. The enzyme catalyses guanosine + phosphate = alpha-D-ribose 1-phosphate + guanine. The catalysed reaction is inosine + phosphate = alpha-D-ribose 1-phosphate + hypoxanthine. It catalyses the reaction thymidine + phosphate = 2-deoxy-alpha-D-ribose 1-phosphate + thymine. It carries out the reaction uridine + phosphate = alpha-D-ribose 1-phosphate + uracil. The enzyme catalyses xanthosine + phosphate = alpha-D-ribose 1-phosphate + xanthine. Catalyzes the phosphorolysis of diverse nucleosides, yielding D-ribose 1-phosphate and the respective free bases. Can use uridine, adenosine, guanosine, cytidine, thymidine, inosine and xanthosine as substrates. Also catalyzes the reverse reactions. This Burkholderia multivorans (strain ATCC 17616 / 249) protein is Pyrimidine/purine nucleoside phosphorylase.